Here is a 353-residue protein sequence, read N- to C-terminus: Cyanuric acid amidohydrolase (353 aa).

The interval 1 to 90 is RU A; the sequence is MSSTALYTVP…NIFVRDERQY (90 aa). Residues Arg49 and 69 to 70 each bind substrate; that span reads SG. Residues 96–231 are RU B; sequence GLVTAVGRTR…CHILVVAESD (136 aa). Lys145 is a catalytic residue. Substrate contacts are provided by residues Arg177 and 214 to 215; that span reads SS. Residue Ser214 is the Nucleophile of the active site. Residues 237–353 form an RU C region; that stretch reads LRAAHTAMRD…TANATGEASR (117 aa). Glu275 contributes to the Mg(2+) binding site. Residues Arg302 and 321–322 each bind substrate; that span reads SG. Mg(2+) contacts are provided by Ala324, Gln327, Gly328, Pro329, and Gly332.

It belongs to the cyclic amide hydrolase (CyAH) family. Homotetramer.

The catalysed reaction is cyanurate + H2O = 1-carboxybiuret + H(+). The protein operates within xenobiotic degradation; atrazine degradation; biuret from cyanurate: step 1/1. Its activity is regulated as follows. Inhibited by barbituric acid. Its function is as follows. Responsible for the hydrolysis of cyanuric acid, an intermediate formed during catabolism of s-triazine based compounds in herbicides such as atrazine and polymers such as melamine. Catalyzes the hydrolytic opening of the s-triazine ring of cyanuric acid (2,4,6-trihydroxy-s-triazine) to yield carbon dioxide and carboxybiuret, which spontaneously decarboxylates to biuret. Required for growth on melamine or cyanuric acid as sole nitrogen source. This Rhodococcus sp protein is Cyanuric acid amidohydrolase.